A 132-amino-acid polypeptide reads, in one-letter code: MRRERYLEKIEYIVEALSEIPERVKTPIEVSGVFYNLLTSIESAMDISAMLVKDLGGRVEDDYSNVEMLKELGIIDEELAEGLKKCNGLRNWLVHRYNRVDKELVLSSVEEVKALLLKFIQRVEDVLEKIEP.

Active-site residues include R90 and H95. Residues 90-97 carry the RX(4)HXY motif motif; the sequence is RNWLVHRY. Residue Y97 is modified to O-di-AMP-tyrosine.

The protein belongs to the HepT RNase toxin family. As to quaternary structure, homodimer, probably forms a complex with cognate antitoxin AF_2432. Modified by cognate antitoxin AF_2432; probably at least 2 successive AMPylation events occur on Tyr-97.

Its function is as follows. Probable toxic component of a putative type VII toxin-antitoxin (TA) system, probably an RNase. Probably neutralized by cognate antitoxin AF_2432. Neutralization may be due to AMPylation by AF_2432. The sequence is that of Putative RNase AF_2433 from Archaeoglobus fulgidus (strain ATCC 49558 / DSM 4304 / JCM 9628 / NBRC 100126 / VC-16).